Reading from the N-terminus, the 250-residue chain is Transcriptional activator protein EchR (250 aa).

An HTH luxR-type domain is found at 173-238 (KSQEPNIFSQ…HAIRLGVEMN (66 aa)). Residues 197–216 (YQEIALILGITTSTVKFHIG) constitute a DNA-binding region (H-T-H motif).

This sequence belongs to the autoinducer-regulated transcriptional regulatory protein family.

Functions as a potential ohlL-responsive transcriptional regulator. This chain is Transcriptional activator protein EchR (echR), found in Dickeya chrysanthemi (Pectobacterium chrysanthemi).